A 795-amino-acid polypeptide reads, in one-letter code: RINT1-like protein MAG2 (795 aa).

Residues 35–64 adopt a coiled-coil conformation; sequence TGLVSELQTEISELDQRLAGLNRQLESGLA. Positions 91–111 are disordered; sequence TSVTRSASDSGKEEEATEHVA. Over residues 100-111 the composition is skewed to basic and acidic residues; that stretch reads SGKEEEATEHVA. Positions 207–795 constitute an RINT1/TIP20 domain; sequence ALAMMRPQAI…KKVAKSRVFS (589 aa).

The protein belongs to the RINT1 family. As to quaternary structure, interacts with SEC20 and SYP81. Interacts with ZW10 (via the central region). Forms a complex with ZW10/MIP1, MIP2 and MIP3 on the endoplasmic reticulum. Highly expressed in dry seeds. Expressed at low levels in roots, rosette and cauline leaves, stems and flowers.

The protein localises to the endoplasmic reticulum membrane. Functions in the anterograde transport of storage protein precursors from the endoplasmic reticulum (ER) to the Golgi complex and in the retrograde transport from the Golgi complex to the ER. Forms a complex with ZW10/MIP1, MIP2 and MIP3 on the ER that may be responsible for efficient transport of seed storage proteins. Required for the responses to environmental stresses during seed germination and vegetative growth. Probably not involved in the retrograde transport from the ER to the apoplast. The sequence is that of RINT1-like protein MAG2 from Arabidopsis thaliana (Mouse-ear cress).